Reading from the N-terminus, the 237-residue chain is Probable transcriptional regulatory protein MCAP_0598 (237 aa).

Belongs to the TACO1 family.

Its subcellular location is the cytoplasm. The sequence is that of Probable transcriptional regulatory protein MCAP_0598 from Mycoplasma capricolum subsp. capricolum (strain California kid / ATCC 27343 / NCTC 10154).